Here is a 654-residue protein sequence, read N- to C-terminus: Arrestin domain-containing protein C (654 aa).

Residues 1-105 form the C2 domain; it reads MTQRSLKINI…AKRNLMDQWL (105 aa). The stretch at 616–647 forms a coiled coil; sequence AKRIFLKIQQIQSERQKQQEQQEQQVVSNLEA.

The protein belongs to the arrestin family.

This is Arrestin domain-containing protein C (adcC) from Dictyostelium discoideum (Social amoeba).